Consider the following 98-residue polypeptide: MPTETERCIESLIAVFQKYSGKDGNSCHLSKTEFLSFMNTELAAFTKNQKDPGVLDRMMKKLDLNSDGQLDFQEFLNLIGGLAIACHESFLQTSQKRI.

Thr5 carries the post-translational modification Phosphothreonine. 2 consecutive EF-hand domains span residues 12–47 (LIAVFQKYSGKDGNSCHLSKTEFLSFMNTELAAFTK) and 50–85 (KDPGVLDRMMKKLDLNSDGQLDFQEFLNLIGGLAIA). The residue at position 22 (Lys22) is an N6-acetyllysine. Positions 26, 28, 33, 63, 65, 67, 69, and 74 each coordinate Ca(2+).

Belongs to the S-100 family. As to quaternary structure, homodimer; disulfide-linked. Post-translationally, phosphorylation at Thr-5 significantly suppresses homodimerization and promotes association with NCL/nucleolin which induces nuclear translocation.

The protein localises to the cytoplasm. It localises to the nucleus. Its function is as follows. Facilitates the differentiation and the cornification of keratinocytes. This Rattus norvegicus (Rat) protein is Protein S100-A11 (S100a11).